A 232-amino-acid chain; its full sequence is 2,3,4,5-tetrahydropyridine-2,6-dicarboxylate N-acetyltransferase (232 aa).

The protein belongs to the transferase hexapeptide repeat family. DapH subfamily.

It carries out the reaction (S)-2,3,4,5-tetrahydrodipicolinate + acetyl-CoA + H2O = L-2-acetamido-6-oxoheptanedioate + CoA. The protein operates within amino-acid biosynthesis; L-lysine biosynthesis via DAP pathway; LL-2,6-diaminopimelate from (S)-tetrahydrodipicolinate (acetylase route): step 1/3. In terms of biological role, catalyzes the transfer of an acetyl group from acetyl-CoA to tetrahydrodipicolinate. The polypeptide is 2,3,4,5-tetrahydropyridine-2,6-dicarboxylate N-acetyltransferase (Streptococcus thermophilus (strain CNRZ 1066)).